A 186-amino-acid polypeptide reads, in one-letter code: Peptidyl-tRNA hydrolase (186 aa).

Y14 provides a ligand contact to tRNA. H19 (proton acceptor) is an active-site residue. Positions 65, 67, and 113 each coordinate tRNA.

The protein belongs to the PTH family. As to quaternary structure, monomer.

It is found in the cytoplasm. It carries out the reaction an N-acyl-L-alpha-aminoacyl-tRNA + H2O = an N-acyl-L-amino acid + a tRNA + H(+). Functionally, hydrolyzes ribosome-free peptidyl-tRNAs (with 1 or more amino acids incorporated), which drop off the ribosome during protein synthesis, or as a result of ribosome stalling. In terms of biological role, catalyzes the release of premature peptidyl moieties from peptidyl-tRNA molecules trapped in stalled 50S ribosomal subunits, and thus maintains levels of free tRNAs and 50S ribosomes. The sequence is that of Peptidyl-tRNA hydrolase from Limosilactobacillus fermentum (strain NBRC 3956 / LMG 18251) (Lactobacillus fermentum).